We begin with the raw amino-acid sequence, 717 residues long: Methylcrotonoyl-CoA carboxylase subunit alpha, mitochondrial (717 aa).

A mitochondrion-targeting transit peptide spans methionine 1–glycine 38. In terms of domain architecture, Biotin carboxylation spans isoleucine 45–lysine 490. ATP is bound at residue lysine 159. Positions lysine 163–alanine 360 constitute an ATP-grasp domain. N6-acetyllysine is present on residues lysine 180 and lysine 193. Residues lysine 201 and glycine 207 to glycine 208 each bind ATP. At lysine 233 the chain carries N6-acetyllysine. ATP contacts are provided by histidine 251, histidine 278, and glutamate 318. Arginine 335 is an active-site residue. Residue lysine 490 is modified to N6-acetyllysine. N6-acetyllysine; alternate is present on lysine 577. Residue lysine 577 is modified to N6-succinyllysine; alternate. A Biotinyl-binding domain is found at serine 622–glutamate 711. Lysine 677 is modified (N6-biotinyllysine).

As to quaternary structure, probably a dodecamer composed of six biotin-containing alpha subunits (MCCC1) and six beta (MCCC2) subunits. Interacts (via the biotin carboxylation domain) with SIRT4. The cofactor is biotin. In terms of processing, acetylated.

The protein localises to the mitochondrion matrix. It carries out the reaction 3-methylbut-2-enoyl-CoA + hydrogencarbonate + ATP = 3-methyl-(2E)-glutaconyl-CoA + ADP + phosphate + H(+). Its pathway is amino-acid degradation; L-leucine degradation; (S)-3-hydroxy-3-methylglutaryl-CoA from 3-isovaleryl-CoA: step 2/3. Biotin-attachment subunit of the 3-methylcrotonyl-CoA carboxylase, an enzyme that catalyzes the conversion of 3-methylcrotonyl-CoA to 3-methylglutaconyl-CoA, a critical step for leucine and isovaleric acid catabolism. This Mus musculus (Mouse) protein is Methylcrotonoyl-CoA carboxylase subunit alpha, mitochondrial (Mccc1).